Reading from the N-terminus, the 341-residue chain is Phosphate acyltransferase (341 aa).

It belongs to the PlsX family. Homodimer. Probably interacts with PlsY.

It is found in the cytoplasm. It catalyses the reaction a fatty acyl-[ACP] + phosphate = an acyl phosphate + holo-[ACP]. It functions in the pathway lipid metabolism; phospholipid metabolism. Functionally, catalyzes the reversible formation of acyl-phosphate (acyl-PO(4)) from acyl-[acyl-carrier-protein] (acyl-ACP). This enzyme utilizes acyl-ACP as fatty acyl donor, but not acyl-CoA. The protein is Phosphate acyltransferase of Photobacterium profundum (strain SS9).